A 350-amino-acid chain; its full sequence is Thioredoxin-like fold domain-containing protein MRL7L, chloroplastic (350 aa).

The N-terminal 48 residues, 1 to 48 (MILPFSTQFTCPVQDNGFSPSSLLSHCKRDRFEVTSLRYDSFGSVKTA), are a transit peptide targeting the chloroplast. 2 disordered regions span residues 78–107 (KKEE…LDDP) and 182–201 (NEKK…DSEK). 2 stretches are compositionally biased toward acidic residues: residues 82–93 (DSDSEDEEDEVK) and 186–200 (EEED…DDSE).

The protein localises to the plastid. It localises to the chloroplast stroma. Its subcellular location is the nucleus. Functionally, plays an essential role in early steps of chloroplast development. Involved in the regulation of plastid gene expression. Required for the proper function of the plastid transcriptional machinery and protein accumulation in thylakoid membranes. May function as molecular chaperone to ensure proper organization of the nucleoids in chloroplasts. Is a necessary component of phytochrome signaling for photosynthesis-associated plastid-encoded genes (PhAPGs) activation. Mediates the degradation of two repressors of chloroplast biogenesis, PIF1 and PIF3 in nucleus. Promotes the assembly of the plastid-encoded RNA polymerase (PEP) complex for PhAPG transcription in plastids. The chain is Thioredoxin-like fold domain-containing protein MRL7L, chloroplastic from Arabidopsis thaliana (Mouse-ear cress).